A 267-amino-acid polypeptide reads, in one-letter code: Cyclin-C (267 aa).

Positions 48–151 (IQVLGEQLKL…LLENLDCCLI (104 aa)) constitute a Cyclin N-terminal domain.

This sequence belongs to the cyclin family. Cyclin C subfamily. As to quaternary structure, component of the Cdk8 module of the Mediator complex, composed of CycC, Cdk8, kto and skd.

It is found in the nucleus. Functionally, component of the Mediator complex, a coactivator involved in regulated gene transcription of nearly all RNA polymerase II-dependent genes. Mediator functions as a bridge to convey information from gene-specific regulatory proteins to the basal RNA polymerase II transcription machinery. Mediator is recruited to promoters by direct interactions with regulatory proteins and serves as a scaffold for the assembly of a functional preinitiation complex with RNA polymerase II and the general transcription factors. Binds to and activates cyclin-dependent kinase Cdk8 that phosphorylates the CTD (C-terminal domain) of the large subunit of RNA polymerase II (RNAp II), which may inhibit the formation of a transcription initiation complex. Required for leg and eye development and macrochaete specification or differentiation. The protein is Cyclin-C (CycC) of Drosophila melanogaster (Fruit fly).